We begin with the raw amino-acid sequence, 22 residues long: Myofibril-bound serine protease (22 aa).

One can recognise a Peptidase S1 domain in the interval 1 to 22 (IVGGYECEAYSKPYQVSINLGY).

This sequence belongs to the peptidase S1 family. As to expression, detected in skeletal muscle (at protein level).

It is found in the cytoplasm. In terms of biological role, serine protease which degrades the myosin heavy chain and tropomyosin, but not actin. Selectively cleaves Arg-|-Xaa bonds. The sequence is that of Myofibril-bound serine protease from Saurida undosquamis (Brushtooth lizardfish).